Reading from the N-terminus, the 460-residue chain is Probable fibrosin-1 (460 aa).

K8 is covalently cross-linked (Glycyl lysine isopeptide (Lys-Gly) (interchain with G-Cter in SUMO2)). Disordered stretches follow at residues 40-79, 205-311, and 406-460; these read SLQG…FRPP, FAQK…KEEA, and YSRL…RADR. A compositionally biased stretch (pro residues) spans 212-223; it reads GAPPAFASPPDP. Asymmetric dimethylarginine is present on residues R229 and R239. Over residues 248 to 272 the composition is skewed to basic and acidic residues; the sequence is GSDKERPVERREPSITKEEKDRDLP. The residue at position 281 (S281) is a Phosphoserine. Residues 288-311 show a composition bias toward basic and acidic residues; it reads RAGEEGPRPTKESVRVKEERKEEA. A compositionally biased stretch (pro residues) spans 436–453; sequence APPPLVPAPRPSSPPRGP.

This is Probable fibrosin-1 (FBRS) from Homo sapiens (Human).